Here is a 97-residue protein sequence, read N- to C-terminus: MTDLRHYDVIVSPVITEKSTMVSEHNQVVFNVARKATKPEIKAAVEALFGVKVTAVNTAVCKGKVKRFRGLVGRQSDVKKAIVTLAEGQSIDVSTGL.

Belongs to the universal ribosomal protein uL23 family. In terms of assembly, part of the 50S ribosomal subunit. Contacts protein L29, and trigger factor when it is bound to the ribosome.

One of the early assembly proteins it binds 23S rRNA. One of the proteins that surrounds the polypeptide exit tunnel on the outside of the ribosome. Forms the main docking site for trigger factor binding to the ribosome. This chain is Large ribosomal subunit protein uL23, found in Brucella melitensis biotype 2 (strain ATCC 23457).